Reading from the N-terminus, the 123-residue chain is DNA-directed RNA polymerase subunit omega (123 aa).

The tract at residues 67-123 is disordered; the sequence is EESAADSLSLGGFSTADVEAEVGGGPVQPDPGASQERAFDEAADGTAQGSGDPDPTT.

It belongs to the RNA polymerase subunit omega family. The RNAP catalytic core consists of 2 alpha, 1 beta, 1 beta' and 1 omega subunit. When a sigma factor is associated with the core the holoenzyme is formed, which can initiate transcription.

The enzyme catalyses RNA(n) + a ribonucleoside 5'-triphosphate = RNA(n+1) + diphosphate. Promotes RNA polymerase assembly. Latches the N- and C-terminal regions of the beta' subunit thereby facilitating its interaction with the beta and alpha subunits. This chain is DNA-directed RNA polymerase subunit omega, found in Halorhodospira halophila (strain DSM 244 / SL1) (Ectothiorhodospira halophila (strain DSM 244 / SL1)).